We begin with the raw amino-acid sequence, 56 residues long: Large ribosomal subunit protein bL33 (56 aa).

The protein belongs to the bacterial ribosomal protein bL33 family.

The protein is Large ribosomal subunit protein bL33 of Actinobacillus pleuropneumoniae serotype 5b (strain L20).